The primary structure comprises 358 residues: Histidinol-phosphate aminotransferase (358 aa).

Position 221 is an N6-(pyridoxal phosphate)lysine (Lys-221).

The protein belongs to the class-II pyridoxal-phosphate-dependent aminotransferase family. Histidinol-phosphate aminotransferase subfamily. Homodimer. It depends on pyridoxal 5'-phosphate as a cofactor.

The catalysed reaction is L-histidinol phosphate + 2-oxoglutarate = 3-(imidazol-4-yl)-2-oxopropyl phosphate + L-glutamate. It participates in amino-acid biosynthesis; L-histidine biosynthesis; L-histidine from 5-phospho-alpha-D-ribose 1-diphosphate: step 7/9. The sequence is that of Histidinol-phosphate aminotransferase from Caldicellulosiruptor saccharolyticus (strain ATCC 43494 / DSM 8903 / Tp8T 6331).